The primary structure comprises 494 residues: Alpha-amylase-related protein (494 aa).

Positions 1-20 are cleaved as a signal peptide; that stretch reads MFKFATAVILCLVAASSTLA. Glutamine 21 bears the Pyrrolidone carboxylic acid mark. A disulfide bridge links cysteine 48 with cysteine 104. Residues asparagine 118, glutamine 169, and aspartate 178 each contribute to the Ca(2+) site. A disulfide bridge connects residues cysteine 157 and cysteine 171. Arginine 206 provides a ligand contact to chloride. Catalysis depends on aspartate 208, which acts as the Nucleophile. Histidine 212 is a binding site for Ca(2+). The Proton donor role is filled by glutamate 245. Positions 308 and 343 each coordinate chloride. Intrachain disulfides connect cysteine 376-cysteine 382, cysteine 418-cysteine 441, and cysteine 448-cysteine 460.

It belongs to the glycosyl hydrolase 13 family. Monomer. Requires Ca(2+) as cofactor. Chloride serves as cofactor.

The protein resides in the secreted. The catalysed reaction is Endohydrolysis of (1-&gt;4)-alpha-D-glucosidic linkages in polysaccharides containing three or more (1-&gt;4)-alpha-linked D-glucose units.. This Drosophila bipectinata (Fruit fly) protein is Alpha-amylase-related protein (Amyrel).